The following is a 511-amino-acid chain: Glutamyl-tRNA(Gln) amidotransferase subunit B, mitochondrial (511 aa).

The transit peptide at 1 to 6 (MLRRYL) directs the protein to the mitochondrion.

It belongs to the GatB/GatE family. GatB subfamily. Subunit of the heterotrimeric GatFAB amidotransferase (AdT) complex, composed of A, B and F subunits.

It is found in the mitochondrion. The enzyme catalyses L-glutamyl-tRNA(Gln) + L-glutamine + ATP + H2O = L-glutaminyl-tRNA(Gln) + L-glutamate + ADP + phosphate + H(+). Its function is as follows. Allows the formation of correctly charged Gln-tRNA(Gln) through the transamidation of misacylated Glu-tRNA(Gln) in the mitochondria. The reaction takes place in the presence of glutamine and ATP through an activated gamma-phospho-Glu-tRNA(Gln). In Lodderomyces elongisporus (strain ATCC 11503 / CBS 2605 / JCM 1781 / NBRC 1676 / NRRL YB-4239) (Yeast), this protein is Glutamyl-tRNA(Gln) amidotransferase subunit B, mitochondrial.